The sequence spans 134 residues: Alkaline proteinase inhibitor (134 aa).

An N-terminal signal peptide occupies residues 1–26 (MVFAAWYLKFAFFVALAFSIIGGSMA). Residues C50 and C73 are joined by a disulfide bond.

Belongs to the protease inhibitor I38 family.

It localises to the periplasm. Functionally, inhibitor of the alkaline protease. In Photorhabdus luminescens (Xenorhabdus luminescens), this protein is Alkaline proteinase inhibitor (inh).